A 1061-amino-acid chain; its full sequence is Chimeric ERCC6-PGBD3 protein (1061 aa).

The tract at residues 1 to 39 (MPNEGIPHSSQTQEQDCLQSQPVSNNEEMAIKQESGGDG) is disordered. Residues 8–27 (HSSQTQEQDCLQSQPVSNNE) are compositionally biased toward polar residues. Residue S158 is modified to Phosphoserine. Residue K255 forms a Glycyl lysine isopeptide (Lys-Gly) (interchain with G-Cter in SUMO2) linkage. Disordered stretches follow at residues 287-323 (KQGC…VLSK), 344-466 (GKVG…QRLS), 494-521 (VIQP…INNL), and 537-573 (SDAE…SRRR). Residues 353–363 (RPWESDMRPEA) show a composition bias toward basic and acidic residues. A compositionally biased stretch (acidic residues) spans 364 to 392 (EGDSEGEESEYFPTEEEEEEEDDEVEGAE). S429 and S430 each carry phosphoserine. Over residues 451 to 462 (RYRDDGDEDYYK) the composition is skewed to basic and acidic residues. A compositionally biased stretch (acidic residues) spans 506-515 (SDEESGDEEG). S554 carries the phosphoserine modification.

Expressed in heart and oocytes, but not in granulosa cells (at protein level).

The protein resides in the nucleus. Its function is as follows. Involved in repair of DNA damage following UV irradiation, acting either in the absence of ERCC6 or synergistically with ERCC6. Involved in the regulation of gene expression. In the absence of ERCC6, induces the expression of genes characteristic of interferon-like antiviral responses. This response is almost completely suppressed in the presence of ERCC6. In the presence of ERCC6, regulates the expression of genes involved in metabolism regulation, including IGFBP5 and IGFBP7. In vitro binds to PGBD3-related transposable elements, called MER85s; these non-autonomous 140 bp elements are characterized by the presence of PGBD3 terminal inverted repeats and the absence of internal transposase ORF. The sequence is that of Chimeric ERCC6-PGBD3 protein from Homo sapiens (Human).